A 246-amino-acid polypeptide reads, in one-letter code: 3-deoxy-manno-octulosonate cytidylyltransferase (246 aa).

This sequence belongs to the KdsB family.

The protein resides in the cytoplasm. It carries out the reaction 3-deoxy-alpha-D-manno-oct-2-ulosonate + CTP = CMP-3-deoxy-beta-D-manno-octulosonate + diphosphate. It participates in nucleotide-sugar biosynthesis; CMP-3-deoxy-D-manno-octulosonate biosynthesis; CMP-3-deoxy-D-manno-octulosonate from 3-deoxy-D-manno-octulosonate and CTP: step 1/1. It functions in the pathway bacterial outer membrane biogenesis; lipopolysaccharide biosynthesis. Functionally, activates KDO (a required 8-carbon sugar) for incorporation into bacterial lipopolysaccharide in Gram-negative bacteria. This chain is 3-deoxy-manno-octulosonate cytidylyltransferase, found in Rickettsia massiliae (strain Mtu5).